The chain runs to 188 residues: Large ribosomal subunit protein eL18 (188 aa).

Residue K119 forms a Glycyl lysine isopeptide (Lys-Gly) (interchain with G-Cter in SUMO2) linkage. At S130 the chain carries Phosphoserine. Residues 151-188 (HFGKAPGTPHSHTKPYVRSKGRKFERARGRRASRGYKN) form a disordered region. A Phosphothreonine modification is found at T158. Basic residues-rich tracts occupy residues 161–171 (SHTKPYVRSKG) and 178–188 (RGRRASRGYKN). K164 participates in a covalent cross-link: Glycyl lysine isopeptide (Lys-Gly) (interchain with G-Cter in SUMO2).

The protein belongs to the eukaryotic ribosomal protein eL18 family. In terms of assembly, component of the large ribosomal subunit.

It localises to the cytoplasm. The protein localises to the cytosol. The protein resides in the rough endoplasmic reticulum. Functionally, component of the large ribosomal subunit. The ribosome is a large ribonucleoprotein complex responsible for the synthesis of proteins in the cell. The chain is Large ribosomal subunit protein eL18 (RPL18) from Homo sapiens (Human).